The following is a 427-amino-acid chain: Glutamate-1-semialdehyde 2,1-aminomutase (427 aa).

N6-(pyridoxal phosphate)lysine is present on K265.

This sequence belongs to the class-III pyridoxal-phosphate-dependent aminotransferase family. HemL subfamily. Homodimer. Pyridoxal 5'-phosphate serves as cofactor.

The protein resides in the cytoplasm. The enzyme catalyses (S)-4-amino-5-oxopentanoate = 5-aminolevulinate. The protein operates within porphyrin-containing compound metabolism; protoporphyrin-IX biosynthesis; 5-aminolevulinate from L-glutamyl-tRNA(Glu): step 2/2. The polypeptide is Glutamate-1-semialdehyde 2,1-aminomutase (Edwardsiella ictaluri (strain 93-146)).